Here is a 39-residue protein sequence, read N- to C-terminus: MTASLANYLSSLVWAAVIVVIPAAVALVLISQNDQMYRK.

Residues Ser-10 to Ile-30 form a helical membrane-spanning segment.

It belongs to the PsbX family. Type 1 subfamily. PSII is composed of 1 copy each of membrane proteins PsbA, PsbB, PsbC, PsbD, PsbE, PsbF, PsbH, PsbI, PsbJ, PsbK, PsbL, PsbM, PsbT, PsbX, PsbY, Psb30/Ycf12, peripheral proteins PsbO, CyanoQ (PsbQ), PsbU, PsbV and a large number of cofactors. It forms dimeric complexes.

Its subcellular location is the cellular thylakoid membrane. In terms of biological role, involved in the binding and/or turnover of quinones at the Q(B) site of photosystem II (PSII). PSII is a light-driven water plastoquinone oxidoreductase, using light energy to abstract electrons from H(2)O, generating a proton gradient subsequently used for ATP formation. The sequence is that of Photosystem II reaction center protein X from Prochlorococcus marinus (strain MIT 9303).